A 212-amino-acid polypeptide reads, in one-letter code: ATP-dependent dethiobiotin synthetase BioD (212 aa).

12–17 (DCGKTF) is an ATP binding site. Mg(2+) is bound at residue threonine 16. Lysine 33 is an active-site residue. Serine 37 serves as a coordination point for substrate. Residues aspartate 50, 110 to 113 (EGAG), and 170 to 171 (NC) contribute to the ATP site. Mg(2+)-binding residues include aspartate 50 and glutamate 110.

This sequence belongs to the dethiobiotin synthetase family. Homodimer. It depends on Mg(2+) as a cofactor.

It localises to the cytoplasm. It carries out the reaction (7R,8S)-7,8-diammoniononanoate + CO2 + ATP = (4R,5S)-dethiobiotin + ADP + phosphate + 3 H(+). The protein operates within cofactor biosynthesis; biotin biosynthesis; biotin from 7,8-diaminononanoate: step 1/2. Its function is as follows. Catalyzes a mechanistically unusual reaction, the ATP-dependent insertion of CO2 between the N7 and N8 nitrogen atoms of 7,8-diaminopelargonic acid (DAPA, also called 7,8-diammoniononanoate) to form a ureido ring. This is ATP-dependent dethiobiotin synthetase BioD from Legionella pneumophila subsp. pneumophila (strain Philadelphia 1 / ATCC 33152 / DSM 7513).